The following is a 343-amino-acid chain: General stress protein 30 (343 aa).

Belongs to the polysaccharide pyruvyl transferase family.

The polypeptide is General stress protein 30 (yxaB) (Bacillus subtilis (strain 168)).